A 249-amino-acid chain; its full sequence is MASASSSDGVAGRIQNASLVLVSDNSSTLADIRKAVAMMKNIAVQLEKENQTDKVKDLENSVAELLDLHSDCNHRSTAIQSVANRYQPVEQLTDFKKLLDDEFTKLKATPSSVPQNDHLMRQFREAVWNVHHAGEPMPGDDDEDIVMTSTQCPLLNMTCPLSGKPVTELADPVRSMDCRHVYEKSVILHYIVNNPNANCPVAGCRGKLQNSKVICDAMLKFEIEEMRSLNKQSNRAEVIEDFTEDVDED.

N-acetylalanine is present on Ala2. An SP-RING-type zinc finger spans residues 141 to 228 (DDEDIVMTST…LKFEIEEMRS (88 aa)). Zn(2+)-binding residues include Cys178, His180, Cys199, and Cys204.

The protein belongs to the NSE2 family. In terms of assembly, interacts with SCE1. In terms of processing, sumoylated, possibly via autosumoylation.

The protein resides in the nucleus. It localises to the cytoplasm. It participates in protein modification; protein sumoylation. E3 SUMO-protein ligase that modulates cell cycle progression and functions as a repressor of endocycle onset in meristems. May function downstream of the meristem patterning transcription factors PLETHORA 1 and 2 (PLT1 and PLT2) in root meristem development. Modulates the expression of the mitotic cyclins CYCB1-1 and CYCB1-2 and cyclin-dependent kinases CDKB1-1 and CDKB2-1 in root meristem. Involved in cytokinin signaling in root development. The protein is E3 SUMO-protein ligase MMS21 (MMS21) of Arabidopsis thaliana (Mouse-ear cress).